Reading from the N-terminus, the 128-residue chain is EPIDERMAL PATTERNING FACTOR-like protein 2 (128 aa).

The first 28 residues, 1-28 (MVWSSNMSSFLLILLILNSTHFSLMANG), serve as a signal peptide directing secretion. 3 disulfides stabilise this stretch: Cys60–Cys119, Cys65–Cys71, and Cys68–Cys121. Residues 79-90 (NPQTKLHSPLTT) show a composition bias toward polar residues. The tract at residues 79 to 100 (NPQTKLHSPLTTSSSSSSETIH) is disordered.

The protein belongs to the plant cysteine rich small secretory peptide family. Epidermal patterning factor subfamily.

The protein resides in the secreted. Functionally, controls stomatal patterning. The chain is EPIDERMAL PATTERNING FACTOR-like protein 2 from Arabidopsis thaliana (Mouse-ear cress).